The sequence spans 441 residues: Histidinol dehydrogenase (441 aa).

The substrate site is built by Thr240, Gln262, and His265. Residues Gln262 and His265 each contribute to the Zn(2+) site. Active-site proton acceptor residues include Glu332 and His333. Residues His333, Asp366, Glu420, and His425 each contribute to the substrate site. Asp366 contacts Zn(2+). Position 425 (His425) interacts with Zn(2+).

This sequence belongs to the histidinol dehydrogenase family. Zn(2+) is required as a cofactor.

The enzyme catalyses L-histidinol + 2 NAD(+) + H2O = L-histidine + 2 NADH + 3 H(+). It participates in amino-acid biosynthesis; L-histidine biosynthesis; L-histidine from 5-phospho-alpha-D-ribose 1-diphosphate: step 9/9. Catalyzes the sequential NAD-dependent oxidations of L-histidinol to L-histidinaldehyde and then to L-histidine. The sequence is that of Histidinol dehydrogenase from Streptomyces avermitilis (strain ATCC 31267 / DSM 46492 / JCM 5070 / NBRC 14893 / NCIMB 12804 / NRRL 8165 / MA-4680).